Consider the following 2378-residue polypeptide: Dimodular nonribosomal peptide synthase (2378 aa).

Carrier domains follow at residues 961 to 1036 (APRT…DLAQ) and 2036 to 2111 (GPRT…EMGS). An O-(pantetheine 4'-phosphoryl)serine mark is found at Ser996 and Ser2071.

The protein belongs to the ATP-dependent AMP-binding enzyme family. Pantetheine 4'-phosphate serves as cofactor.

It catalyses the reaction holo-[peptidyl-carrier protein] + L-threonine + ATP = L-threonyl-[peptidyl-carrier protein] + AMP + diphosphate. It carries out the reaction holo-[peptidyl-carrier protein] + glycine + ATP = glycyl-[peptidyl-carrier protein] + AMP + diphosphate. It participates in siderophore biosynthesis; bacillibactin biosynthesis. Its function is as follows. Specifically adenylates L-threonine and, to a lesser extent, glycine and covalently loads both amino acids onto their corresponding peptidyl carrier domains. This Bacillus subtilis (strain 168) protein is Dimodular nonribosomal peptide synthase (dhbF).